The chain runs to 224 residues: 7-cyano-7-deazaguanine synthase (224 aa).

8–18 is a binding site for ATP; that stretch reads VSGGADSATVL. Positions 189, 199, 202, and 205 each coordinate Zn(2+).

The protein belongs to the QueC family. The cofactor is Zn(2+).

It carries out the reaction 7-carboxy-7-deazaguanine + NH4(+) + ATP = 7-cyano-7-deazaguanine + ADP + phosphate + H2O + H(+). Its pathway is purine metabolism; 7-cyano-7-deazaguanine biosynthesis. Catalyzes the ATP-dependent conversion of 7-carboxy-7-deazaguanine (CDG) to 7-cyano-7-deazaguanine (preQ(0)). In Rickettsia felis (strain ATCC VR-1525 / URRWXCal2) (Rickettsia azadi), this protein is 7-cyano-7-deazaguanine synthase.